Reading from the N-terminus, the 330-residue chain is Ketol-acid reductoisomerase (NADP(+)) (330 aa).

The KARI N-terminal Rossmann domain occupies 2-182 (IHVYYDKDAN…GCTKAGVIET (181 aa)). NADP(+) is bound by residues 25–28 (YGSQ), Arg-48, Ser-51, Ser-53, and 83–86 (DEVQ). The active site involves His-108. An NADP(+)-binding site is contributed by Gly-134. The region spanning 183 to 328 (TFKEETETDL…KKLRDMMPWI (146 aa)) is the KARI C-terminal knotted domain. 4 residues coordinate Mg(2+): Asp-191, Glu-195, Glu-227, and Glu-231. Ser-252 is a binding site for substrate.

This sequence belongs to the ketol-acid reductoisomerase family. Mg(2+) is required as a cofactor.

It catalyses the reaction (2R)-2,3-dihydroxy-3-methylbutanoate + NADP(+) = (2S)-2-acetolactate + NADPH + H(+). It carries out the reaction (2R,3R)-2,3-dihydroxy-3-methylpentanoate + NADP(+) = (S)-2-ethyl-2-hydroxy-3-oxobutanoate + NADPH + H(+). It participates in amino-acid biosynthesis; L-isoleucine biosynthesis; L-isoleucine from 2-oxobutanoate: step 2/4. It functions in the pathway amino-acid biosynthesis; L-valine biosynthesis; L-valine from pyruvate: step 2/4. Its function is as follows. Involved in the biosynthesis of branched-chain amino acids (BCAA). Catalyzes an alkyl-migration followed by a ketol-acid reduction of (S)-2-acetolactate (S2AL) to yield (R)-2,3-dihydroxy-isovalerate. In the isomerase reaction, S2AL is rearranged via a Mg-dependent methyl migration to produce 3-hydroxy-3-methyl-2-ketobutyrate (HMKB). In the reductase reaction, this 2-ketoacid undergoes a metal-dependent reduction by NADPH to yield (R)-2,3-dihydroxy-isovalerate. This chain is Ketol-acid reductoisomerase (NADP(+)), found in Halothermothrix orenii (strain H 168 / OCM 544 / DSM 9562).